Here is a 125-residue protein sequence, read N- to C-terminus: Somatostatin-2 (125 aa).

Residues Met1 to Ser24 form the signal peptide. Gln25 carries the pyrrolidone carboxylic acid modification. Residues Gln25 to Arg97 constitute a propeptide that is removed on maturation. The interval Ala82–Pro107 is disordered. A disulfide bond links Cys114 and Cys125. Lys120 carries the 5-hydroxylysine modification.

The protein belongs to the somatostatin family.

Its subcellular location is the secreted. Somatostatin inhibits the release of somatotropin. The sequence is that of Somatostatin-2 (sst2) from Lophius americanus (American angler).